A 337-amino-acid chain; its full sequence is Ribosomal RNA small subunit methyltransferase H (337 aa).

S-adenosyl-L-methionine contacts are provided by residues 45–47 (GGH), Asp64, Phe91, Asp120, and Gln127.

This sequence belongs to the methyltransferase superfamily. RsmH family.

Its subcellular location is the cytoplasm. It carries out the reaction cytidine(1402) in 16S rRNA + S-adenosyl-L-methionine = N(4)-methylcytidine(1402) in 16S rRNA + S-adenosyl-L-homocysteine + H(+). Specifically methylates the N4 position of cytidine in position 1402 (C1402) of 16S rRNA. The chain is Ribosomal RNA small subunit methyltransferase H from Corynebacterium glutamicum (strain R).